Reading from the N-terminus, the 465-residue chain is 3-isopropylmalate dehydratase large subunit (465 aa).

Positions 347, 407, and 410 each coordinate [4Fe-4S] cluster.

Belongs to the aconitase/IPM isomerase family. LeuC type 1 subfamily. As to quaternary structure, heterodimer of LeuC and LeuD. [4Fe-4S] cluster serves as cofactor.

It carries out the reaction (2R,3S)-3-isopropylmalate = (2S)-2-isopropylmalate. Its pathway is amino-acid biosynthesis; L-leucine biosynthesis; L-leucine from 3-methyl-2-oxobutanoate: step 2/4. In terms of biological role, catalyzes the isomerization between 2-isopropylmalate and 3-isopropylmalate, via the formation of 2-isopropylmaleate. This is 3-isopropylmalate dehydratase large subunit from Aeromonas hydrophila subsp. hydrophila (strain ATCC 7966 / DSM 30187 / BCRC 13018 / CCUG 14551 / JCM 1027 / KCTC 2358 / NCIMB 9240 / NCTC 8049).